The following is a 378-amino-acid chain: Chaperone protein DnaJ (378 aa).

Residues 5 to 69 enclose the J domain; sequence EFYDRLGVSK…QKRAAYDQYG (65 aa). The CR-type zinc-finger motif lies at 135 to 217; it reads GTEKEVKYHR…CHGTGHEKQA (83 aa). Residues Cys148, Cys151, Cys165, Cys168, Cys191, Cys194, Cys205, and Cys208 each coordinate Zn(2+). CXXCXGXG motif repeat units follow at residues 148–155, 165–172, 191–198, and 205–212; these read CRTCNGSG, CGRCHGAG, CDVCHGRG, and CTTCHGTG.

It belongs to the DnaJ family. As to quaternary structure, homodimer. Requires Zn(2+) as cofactor.

It is found in the cytoplasm. Functionally, participates actively in the response to hyperosmotic and heat shock by preventing the aggregation of stress-denatured proteins and by disaggregating proteins, also in an autonomous, DnaK-independent fashion. Unfolded proteins bind initially to DnaJ; upon interaction with the DnaJ-bound protein, DnaK hydrolyzes its bound ATP, resulting in the formation of a stable complex. GrpE releases ADP from DnaK; ATP binding to DnaK triggers the release of the substrate protein, thus completing the reaction cycle. Several rounds of ATP-dependent interactions between DnaJ, DnaK and GrpE are required for fully efficient folding. Also involved, together with DnaK and GrpE, in the DNA replication of plasmids through activation of initiation proteins. The polypeptide is Chaperone protein DnaJ (Streptococcus pneumoniae serotype 4 (strain ATCC BAA-334 / TIGR4)).